Reading from the N-terminus, the 478-residue chain is Alpha-1,3-mannosyl-glycoprotein 4-beta-N-acetylglucosaminyltransferase C (478 aa).

Over 1–23 the chain is Cytoplasmic; the sequence is MFKFHQVKHIFEILDKMRCLRKR. The chain crosses the membrane as a helical; Signal-anchor for type II membrane protein span at residues 24-44; that stretch reads FTVSFLGVLVIFLLFMNLYIE. Topologically, residues 45-478 are lumenal; the sequence is DSYVLEGDKQ…IIRSISIWTS (434 aa). N-linked (GlcNAc...) asparagine glycosylation is found at asparagine 84, asparagine 215, and asparagine 348.

The protein belongs to the glycosyltransferase 54 family. A divalent metal cation is required as a cofactor.

The protein localises to the golgi apparatus membrane. It carries out the reaction N(4)-{beta-D-GlcNAc-(1-&gt;2)-alpha-D-Man-(1-&gt;3)-[beta-D-GlcNAc-(1-&gt;2)-alpha-D-Man-(1-&gt;6)]-beta-D-Man-(1-&gt;4)-beta-D-GlcNAc-(1-&gt;4)-beta-D-GlcNAc}-L-asparaginyl-[protein] + UDP-N-acetyl-alpha-D-glucosamine = N(4)-{beta-D-GlcNAc-(1-&gt;2)-[beta-D-GlcNAc-(1-&gt;4)]-alpha-D-Man-(1-&gt;3)-[beta-D-GlcNAc-(1-&gt;2)-alpha-D-Man-(1-&gt;6)]-beta-D-Man-(1-&gt;4)-beta-D-GlcNAc-(1-&gt;4)-beta-D-GlcNAc}-L-asparaginyl-[protein] + UDP + H(+). It functions in the pathway protein modification; protein glycosylation. Functionally, glycosyltransferase that participates in the transfer of N-acetylglucosamine (GlcNAc) to the core mannose residues of N-linked glycans. Catalyzes the formation of the GlcNAcbeta1-4 branch on the GlcNAcbeta1-2Manalpha1-3 arm of the core structure of N-linked glycans. Essential for the production of tri- and tetra-antennary N-linked sugar chains. Does not catalyze the transfer of GlcNAc to the Manalpha1-6 arm to form GlcNAcBeta1-4Manalpha1-6 linkage ('GnT-VI' activity). The sequence is that of Alpha-1,3-mannosyl-glycoprotein 4-beta-N-acetylglucosaminyltransferase C (MGAT4C) from Sus scrofa (Pig).